A 60-amino-acid polypeptide reads, in one-letter code: Large ribosomal subunit protein bL32 (60 aa).

Residues 1 to 23 (MAKHPVPKKKTSKSKRDMRRSHH) are compositionally biased toward basic residues. The segment at 1–34 (MAKHPVPKKKTSKSKRDMRRSHHALTAPNLTECP) is disordered. The Zn(2+) site is built by cysteine 33, cysteine 36, cysteine 46, and cysteine 49. The segment at 33–49 (CPQCHGKKLSHHICPNC) adopts a C4-type zinc-finger fold.

It belongs to the bacterial ribosomal protein bL32 family. Part of the 50S ribosomal subunit. Contacts proteins L17 and L22. Zn(2+) is required as a cofactor.

In terms of biological role, forms a cluster with L17 and L22, and with L22, a pair of 'tweezers' that hold together all the domains of the 23S rRNA. Interacts with the antibiotic troleandomycin which blocks the peptide exit tunnel. The protein is Large ribosomal subunit protein bL32 (rpmF) of Deinococcus radiodurans (strain ATCC 13939 / DSM 20539 / JCM 16871 / CCUG 27074 / LMG 4051 / NBRC 15346 / NCIMB 9279 / VKM B-1422 / R1).